The primary structure comprises 363 residues: NAD(P)H-quinone oxidoreductase subunit 1, chloroplastic (363 aa).

Helical transmembrane passes span 28 to 48 (WVLA…LVIV), 98 to 118 (FSIG…VIPF), 129 to 149 (IGIF…LMSG), 253 to 273 (FGLF…FVTV), 274 to 294 (LYLG…LVEI), 300 to 320 (IFGT…FLFI), and 336 to 356 (LLNL…LLTT).

The protein belongs to the complex I subunit 1 family. As to quaternary structure, NDH is composed of at least 16 different subunits, 5 of which are encoded in the nucleus.

The protein resides in the plastid. It is found in the chloroplast thylakoid membrane. The enzyme catalyses a plastoquinone + NADH + (n+1) H(+)(in) = a plastoquinol + NAD(+) + n H(+)(out). It catalyses the reaction a plastoquinone + NADPH + (n+1) H(+)(in) = a plastoquinol + NADP(+) + n H(+)(out). Functionally, NDH shuttles electrons from NAD(P)H:plastoquinone, via FMN and iron-sulfur (Fe-S) centers, to quinones in the photosynthetic chain and possibly in a chloroplast respiratory chain. The immediate electron acceptor for the enzyme in this species is believed to be plastoquinone. Couples the redox reaction to proton translocation, and thus conserves the redox energy in a proton gradient. This is NAD(P)H-quinone oxidoreductase subunit 1, chloroplastic from Citrus sinensis (Sweet orange).